The chain runs to 161 residues: Large ribosomal subunit protein uL15 (161 aa).

A disordered region spans residues 1-41 (MTKLNELAPAPGSTKGRMRVGRGPGSGKGKTAGRGVKGQKA). The span at 22-36 (RGPGSGKGKTAGRGV) shows a compositional bias: gly residues.

It belongs to the universal ribosomal protein uL15 family. Part of the 50S ribosomal subunit.

Functionally, binds to the 23S rRNA. This is Large ribosomal subunit protein uL15 from Caulobacter sp. (strain K31).